A 211-amino-acid chain; its full sequence is Large ribosomal subunit protein uL3 (211 aa).

Belongs to the universal ribosomal protein uL3 family. In terms of assembly, part of the 50S ribosomal subunit. Forms a cluster with proteins L14 and L19.

In terms of biological role, one of the primary rRNA binding proteins, it binds directly near the 3'-end of the 23S rRNA, where it nucleates assembly of the 50S subunit. This Halothermothrix orenii (strain H 168 / OCM 544 / DSM 9562) protein is Large ribosomal subunit protein uL3.